Consider the following 153-residue polypeptide: Probable trafficking protein particle complex subunit 2 (153 aa).

The protein belongs to the TRAPP small subunits family. Sedlin subfamily. Part of the multisubunit TRAPP (transport protein particle) complex.

Its subcellular location is the cytoplasm. The protein localises to the perinuclear region. The protein resides in the endoplasmic reticulum. It is found in the golgi apparatus. May play a role in vesicular transport from endoplasmic reticulum to Golgi. The protein is Probable trafficking protein particle complex subunit 2 of Nematostella vectensis (Starlet sea anemone).